The sequence spans 553 residues: MRNFPEIQNTAYDLIVIGGGINGVGTARDGALRGLKTLLIEKDDFASGTSSWSTRLIHGGLRYLEYFEFNLVRESLREREVLLHTAPHLVQPLQLTIPVYDWSSRAYWEIQAGMILYDILSFDKTLPSHRMLSPQQFQQLFRAAEKKGLKGGAQYFDGQVEYAERLDLEVTLSAQKAGAAMLNYVAVKGLEKGENNLITAIHCQDQLSGEKFTVNSAQAIVINTTGPWVDEVCGLAHRGGEPVAIVQERKIGGTKGSHIVVDPFPGAPASALYVEAFVDKRPYFIIPWLGKYLIGTTDHRYDGSLDRVKASDDEIDYLIAETNRVMPAAQLTRQDVRFTYSGVRPLPYTDGKKAGSITRNHILYDHSQDGVNNLISLIGGKLTTYRQVGEEMVDKVYGKLRRSAPPCPTLTQPLPGAEAYPLSLETAMDKYGNHLERHSIQHLFCLYGARAGDILALVHGAPELGERIIPSLPDIKAQVVFAVQAEMAHTLVDICRRRTAIAMVTNDYGFSALAGICQTLTDHCGWTQEQCDKQIQKYHEYMEQNCIPDYCLH.

Residue 13-41 participates in FAD binding; the sequence is DLIVIGGGINGVGTARDGALRGLKTLLIE.

The protein belongs to the FAD-dependent glycerol-3-phosphate dehydrogenase family. Requires FAD as cofactor.

It is found in the cytoplasm. It catalyses the reaction a quinone + sn-glycerol 3-phosphate = dihydroxyacetone phosphate + a quinol. This chain is Glycerol-3-phosphate dehydrogenase (glpD), found in Synechocystis sp. (strain ATCC 27184 / PCC 6803 / Kazusa).